A 281-amino-acid polypeptide reads, in one-letter code: Thioesterase PikA5 (281 aa).

The tract at residues 26 to 249 is thioesterase; it reads RLVCLPHAGG…WHEICNDISD (224 aa). Ser-99 acts as the Nucleophile; for thioesterase activity in catalysis. The Proton acceptor; for thioesterase activity role is filled by His-233.

The protein belongs to the thioesterase family.

The protein operates within antibiotic biosynthesis. Its function is as follows. Involved in the biosynthesis of 12- and 14-membered ring macrolactone antibiotics such as methymycin, neomethymycin, narbomycin and pikromycin. Responsible for removing mis-formed acyl moieties (aberrant decarboxylation) that are bound to the PKS and could block it. Catalyzes the cleavage of methylmalonyl-[acp]. It exhibits some acyl-group specificity, and catalyzes the cleavage of propionyl and butyryl derivatives faster than acetyl malonyl or methylmalonyl derivatives. This chain is Thioesterase PikA5, found in Streptomyces venezuelae.